The primary structure comprises 24 residues: RuBisCO large subunit-binding protein subunit beta, chloroplastic (24 aa).

Belongs to the chaperonin (HSP60) family. Oligomer of probably six alpha and six beta subunits.

Its subcellular location is the plastid. It localises to the chloroplast. In terms of biological role, this protein binds RuBisCO small and large subunits and is implicated in the assembly of the enzyme oligomer. In Populus euphratica (Euphrates poplar), this protein is RuBisCO large subunit-binding protein subunit beta, chloroplastic.